A 174-amino-acid polypeptide reads, in one-letter code: Adipose-secreted signaling protein (174 aa).

Alanine 2 bears the N-acetylalanine mark. At threonine 147 the chain carries Phosphothreonine.

Belongs to the ADISSP family.

The protein resides in the secreted. Functionally, adipocyte-secreted protein (adipokine) that acts as a key regulator for white adipose tissue (WAT) thermogenesis and glucose homeostasis at least in part through activation of protein kinase A (PKA). In Rattus norvegicus (Rat), this protein is Adipose-secreted signaling protein.